The chain runs to 326 residues: Ribosomal large subunit pseudouridine synthase D (326 aa).

Positions 18–91 (QRLDQALAEM…IPLDIVYEDE (74 aa)) constitute an S4 RNA-binding domain. The active site involves Asp-139.

This sequence belongs to the pseudouridine synthase RluA family.

The protein localises to the cytoplasm. It catalyses the reaction uridine(1911/1915/1917) in 23S rRNA = pseudouridine(1911/1915/1917) in 23S rRNA. Responsible for synthesis of pseudouridine from uracil at positions 1911, 1915 and 1917 in 23S ribosomal RNA. The chain is Ribosomal large subunit pseudouridine synthase D (rluD) from Shigella flexneri.